A 401-amino-acid polypeptide reads, in one-letter code: NAD(P)H-quinone oxidoreductase subunit H, chloroplastic (401 aa).

This sequence belongs to the complex I 49 kDa subunit family. As to quaternary structure, NDH is composed of at least 16 different subunits, 5 of which are encoded in the nucleus.

The protein resides in the plastid. It is found in the chloroplast thylakoid membrane. The catalysed reaction is a plastoquinone + NADH + (n+1) H(+)(in) = a plastoquinol + NAD(+) + n H(+)(out). It catalyses the reaction a plastoquinone + NADPH + (n+1) H(+)(in) = a plastoquinol + NADP(+) + n H(+)(out). NDH shuttles electrons from NAD(P)H:plastoquinone, via FMN and iron-sulfur (Fe-S) centers, to quinones in the photosynthetic chain and possibly in a chloroplast respiratory chain. The immediate electron acceptor for the enzyme in this species is believed to be plastoquinone. Couples the redox reaction to proton translocation, and thus conserves the redox energy in a proton gradient. This Aethionema cordifolium (Lebanon stonecress) protein is NAD(P)H-quinone oxidoreductase subunit H, chloroplastic.